Consider the following 258-residue polypeptide: Malonyl-[acyl-carrier protein] O-methyltransferase (258 aa).

This sequence belongs to the methyltransferase superfamily.

The enzyme catalyses malonyl-[ACP] + S-adenosyl-L-methionine = malonyl-[ACP] methyl ester + S-adenosyl-L-homocysteine. Its pathway is cofactor biosynthesis; biotin biosynthesis. Its function is as follows. Converts the free carboxyl group of a malonyl-thioester to its methyl ester by transfer of a methyl group from S-adenosyl-L-methionine (SAM). It allows to synthesize pimeloyl-ACP via the fatty acid synthetic pathway. This Haemophilus ducreyi (strain 35000HP / ATCC 700724) protein is Malonyl-[acyl-carrier protein] O-methyltransferase.